We begin with the raw amino-acid sequence, 147 residues long: Large ribosomal subunit protein uL15 (147 aa).

A disordered region spans residues 1 to 58; that stretch reads MKLHELKPAQGSTKAPKRLGRGIGSGTGKTSGKGHKGQKARAGGGVRPGFEGGQQPLA. Composition is skewed to gly residues over residues 21-31 and 42-52; these read RGIGSGTGKTS and AGGGVRPGFEG.

It belongs to the universal ribosomal protein uL15 family. As to quaternary structure, part of the 50S ribosomal subunit.

Its function is as follows. Binds to the 23S rRNA. The polypeptide is Large ribosomal subunit protein uL15 (Desulfitobacterium hafniense (strain Y51)).